The sequence spans 595 residues: Estrogen receptor (595 aa).

The modulating (transactivation AF-1); mediates interaction with MACROD1 stretch occupies residues 1–184 (MTMTLHTKAS…AMESAKETRY (184 aa)). Serine 10 carries O-linked (GlcNAc) serine glycosylation. The segment at 35-47 (LERPLGEVYVDGS) is required for interaction with NCOA1. The tract at residues 35 to 174 (LERPLGEVYV…LASTGDKGSM (140 aa)) is interaction with DDX5; self-association. Phosphoserine; by CDK2 occurs at positions 104 and 106. Residue serine 118 is modified to Phosphoserine. The segment at 149–173 (FYRPTSDNRRQSGRERLASTGDKGS) is disordered. Positions 154-165 (SDNRRQSGRERL) are enriched in basic and acidic residues. Residue serine 167 is modified to Phosphoserine; by CK2. 2 NR C4-type zinc fingers span residues 185–205 (CAVCNDYASGYHYGVWSCEGC) and 221–245 (CPATNQCTIDKNRRKSCQACRLRKC). Positions 185 to 250 (CAVCNDYASG…RLRKCYEVGM (66 aa)) form a DNA-binding region, nuclear receptor. The mediates interaction with DNTTIP2 stretch occupies residues 185 to 310 (CAVCNDYASG…TKKNSPALSL (126 aa)). The interval 251–310 (MKGGIRKDRRGGRMLKHKRQRDEGEGRNEVGSSGDVRASNLWPSPLLIKHTKKNSPALSL) is hinge. Over residues 257–269 (KDRRGGRMLKHKR) the composition is skewed to basic residues. The interval 257-287 (KDRRGGRMLKHKRQRDEGEGRNEVGSSGDVR) is disordered. Arginine 260 is subject to Asymmetric dimethylarginine; by PRMT1. Positions 262–595 (GRMLKHKRQR…EEAGAFPTTV (334 aa)) are interaction with AKAP13. Positions 264 to 595 (MLKHKRQRDE…EEAGAFPTTV (332 aa)) are self-association. Positions 311–547 (TADQMVSALL…DLLLEMLDAH (237 aa)) constitute an NR LBD domain. The tract at residues 311-595 (TADQMVSALL…EEAGAFPTTV (285 aa)) is transactivation AF-2. 17beta-estradiol is bound by residues glutamate 353 and arginine 394. Cysteine 447 carries the S-palmitoyl cysteine lipid modification. Histidine 524 contacts 17beta-estradiol. A Phosphotyrosine; by Tyr-kinases modification is found at tyrosine 537. The O-linked (GlcNAc) threonine glycan is linked to threonine 571.

Belongs to the nuclear hormone receptor family. NR3 subfamily. Binds DNA as a homodimer. Can form a heterodimer with ESR2. Interacts with coactivator NCOA5. Interacts with PELP1, the interaction is enhanced by 17-beta-estradiol; the interaction increases ESR1 transcriptional activity. Interacts with NCOA7; the interaction is ligand-inducible. Interacts with AKAP13, CUEDC2, HEXIM1, KDM5A, MAP1S, SMARD1, and UBE1C. Interacts with MUC1; the interaction is stimulated by 7 beta-estradiol (E2) and enhances ESR1-mediated transcription. Interacts with DNTTIP2, and UIMC1. Interacts with KMT2D/MLL2. Interacts with ATAD2; the interaction is enhanced by estradiol. Interacts with KIF18A and LDB1. Interacts with RLIM (via its C-terminus). Interacts with MACROD1. Interacts with SH2D4A and PLCG. Interacts with SH2D4A; the interaction blocks binding to PLCG and inhibits estrogen-induced cell proliferation. Interacts with DYNLL1. Interacts with CCDC62; the interaction requires estradiol and appears to enhance the transcription of target genes. Interacts with NR2C1; the interaction prevents homodimerization of ESR1 and suppresses its transcriptional activity and cell growth. Interacts with DNAAF4. Interacts with PRMT2. Interacts with RBFOX2. Interacts with EP300; the interaction is estrogen-dependent and enhanced by CITED1. Interacts with CITED1; the interaction is estrogen-dependent. Interacts with FAM120B, FOXL2, PHB2 and SLC30A9. Interacts with coactivators NCOA3 and NCOA6. Interacts with STK3/MST2 only in the presence of SAV1 and vice-versa. Binds to CSNK1D. Interacts with NCOA2; NCOA2 can interact with ESR1 AF-1 and AF-2 domains simultaneously and mediate their transcriptional synergy. Interacts with DDX5. Interacts with NCOA1; the interaction seems to require a self-association of N-terminal and C-terminal regions. Interacts with ZNF366, DDX17, NFKB1, RELA, SP1 and SP3. Interacts with NRIP1. Interacts with GPER1; the interaction occurs in an estrogen-dependent manner. Interacts with CLOCK and the interaction is stimulated by estrogen. Interacts with TRIP4 (ufmylated); estrogen dependent. Interacts with LMTK3; the interaction phosphorylates ESR1 (in vitro) and protects it against proteasomal degradation. Interacts with CCAR2 (via N-terminus) in a ligand-independent manner. Interacts with ZFHX3. Interacts with SFR1 in a ligand-dependent and -independent manner. Interacts with DCAF13, LATS1 and DCAF1; regulates ESR1 ubiquitination and ubiquitin-mediated proteasomal degradation. Interacts (via DNA-binding domain) with POU4F2 (C-terminus); this interaction increases the estrogen receptor ESR1 transcriptional activity in a DNA- and ligand 17-beta-estradiol-independent manner. Interacts with ESRRB isoform 1. Interacts with UBE3A and WBP2. Interacts with GTF2B. Interacts with RBM39. In the absence of hormonal ligand, interacts with TACC1. Interacts with PI3KR1 or PI3KR2 and PTK2/FAK1. Interacts with SRC. Interacts with BAG1; the interaction is promoted in the absence of estradiol (17-beta-estradiol/E2). Interacts with and ubiquitinated by STUB1; the interaction is promoted in the absence of estradiol (17-beta-estradiol/E2). Interacts with NEDD8. Ubiquitinated; regulated by LATS1 via DCAF1 it leads to ESR1 proteasomal degradation. Deubiquitinated by OTUB1. Ubiquitinated by STUB1/CHIP; in the CA1 hippocampal region following loss of endogenous circulating estradiol (17-beta-estradiol/E2). Ubiquitinated by UBR5, leading to its degradation: UBR5 specifically recognizes and binds ligand-bound ESR1 when it is not associated with coactivators (NCOAs). In presence of NCOAs, the UBR5-degron is not accessible, preventing its ubiquitination and degradation. In terms of processing, phosphorylated by cyclin A/CDK2 and CK1. Phosphorylation probably enhances transcriptional activity. Dephosphorylation at Ser-118 by PPP5C inhibits its transactivation activity. Phosphorylated by LMTK3 (in vitro). Post-translationally, palmitoylated at Cys-447 by ZDHHC7 and ZDHHC21. Palmitoylation is required for plasma membrane targeting and for rapid intracellular signaling via ERK and AKT kinases and cAMP generation, but not for signaling mediated by the nuclear hormone receptor. Dimethylated by PRMT1 at Arg-260. The methylation may favor cytoplasmic localization. Demethylated by JMJD6 at Arg-260.

It localises to the nucleus. The protein resides in the cytoplasm. Its subcellular location is the golgi apparatus. The protein localises to the cell membrane. Nuclear hormone receptor. The steroid hormones and their receptors are involved in the regulation of eukaryotic gene expression and affect cellular proliferation and differentiation in target tissues. Ligand-dependent nuclear transactivation involves either direct homodimer binding to a palindromic estrogen response element (ERE) sequence or association with other DNA-binding transcription factors, such as AP-1/c-Jun, c-Fos, ATF-2, Sp1 and Sp3, to mediate ERE-independent signaling. Ligand binding induces a conformational change allowing subsequent or combinatorial association with multiprotein coactivator complexes through LXXLL motifs of their respective components. Mutual transrepression occurs between the estrogen receptor (ER) and NF-kappa-B in a cell-type specific manner. Decreases NF-kappa-B DNA-binding activity and inhibits NF-kappa-B-mediated transcription from the IL6 promoter and displace RELA/p65 and associated coregulators from the promoter. Recruited to the NF-kappa-B response element of the CCL2 and IL8 promoters and can displace CREBBP. Present with NF-kappa-B components RELA/p65 and NFKB1/p50 on ERE sequences. Can also act synergistically with NF-kappa-B to activate transcription involving respective recruitment adjacent response elements; the function involves CREBBP. Can activate the transcriptional activity of TFF1. Also mediates membrane-initiated estrogen signaling involving various kinase cascades. Essential for MTA1-mediated transcriptional regulation of BRCA1 and BCAS3. Maintains neuronal survival in response to ischemic reperfusion injury when in the presence of circulating estradiol (17-beta-estradiol/E2). This is Estrogen receptor (ESR1) from Felis catus (Cat).